We begin with the raw amino-acid sequence, 394 residues long: Elongation factor Tu (394 aa).

One can recognise a tr-type G domain in the interval 10-204 (KPHVNVGTIG…HLDTYIPEPE (195 aa)). Residues 19–26 (GHVDHGKT) form a G1 region. GTP is bound at residue 19–26 (GHVDHGKT). Thr26 lines the Mg(2+) pocket. The G2 stretch occupies residues 60–64 (GITIN). A G3 region spans residues 81-84 (DCPG). GTP is bound by residues 81–85 (DCPGH) and 136–139 (NKCD). Positions 136–139 (NKCD) are G4. Residues 174 to 176 (SAL) form a G5 region.

Belongs to the TRAFAC class translation factor GTPase superfamily. Classic translation factor GTPase family. EF-Tu/EF-1A subfamily. As to quaternary structure, monomer.

It is found in the cytoplasm. It catalyses the reaction GTP + H2O = GDP + phosphate + H(+). GTP hydrolase that promotes the GTP-dependent binding of aminoacyl-tRNA to the A-site of ribosomes during protein biosynthesis. The sequence is that of Elongation factor Tu from Aeromonas salmonicida (strain A449).